An 870-amino-acid polypeptide reads, in one-letter code: Ubiquitin-protein ligase E3A (870 aa).

A Phosphoserine modification is found at serine 8. The C4-type; atypical zinc finger occupies 42-81 (CGNEACTNEFCASCPTFLRMDNNAAAIKALELYKINAKLC). A compositionally biased stretch (basic and acidic residues) spans 171-180 (EELKSLQEKD). The tract at residues 171 to 223 (EELKSLQEKDEDKDEDEKEKAACSAAAMEEDSEASSSRMGDSSQGDNNVQKLG) is disordered. The segment covering 208–220 (RMGDSSQGDNNVQ) has biased composition (polar residues). The residue at position 213 (serine 213) is a Phosphoserine. The region spanning 542 to 870 (NPADLKKQLY…ITYAKGFGML (329 aa)) is the HECT domain. Tyrosine 654 carries the post-translational modification Phosphotyrosine; by ABL1. Cysteine 838 acts as the Glycyl thioester intermediate in catalysis.

The active form is probably a homotrimer. Binds UBQLN1 and UBQLN2. Interacts with the 26S proteasome. Interacts with BPY2. Interacts with HIF1AN, MAPK6 and NEURL4; interaction with MAPK6 may be mediated by NEURL4. Interacts with the proteasomal subunit PSMD4. Interacts with BMAL1. Interacts with ARC. Interacts with ESR1 and WBP2. Phosphorylation at Tyr-654 by ABL1 impairs E3 ligase activity. Widely expressed. Most abundant in brain, heart and thymus.

The protein localises to the cytoplasm. Its subcellular location is the nucleus. It carries out the reaction S-ubiquitinyl-[E2 ubiquitin-conjugating enzyme]-L-cysteine + [acceptor protein]-L-lysine = [E2 ubiquitin-conjugating enzyme]-L-cysteine + N(6)-ubiquitinyl-[acceptor protein]-L-lysine.. The protein operates within protein modification; protein ubiquitination. In terms of biological role, E3 ubiquitin-protein ligase which accepts ubiquitin from an E2 ubiquitin-conjugating enzyme in the form of a thioester and transfers it to its substrates. Several substrates have been identified including the BMAL1, ARC, LAMTOR1, RAD23A and RAD23B, MCM7 (which is involved in DNA replication), annexin A1, the PML tumor suppressor, and the cell cycle regulator CDKN1B. Additionally, may function as a cellular quality control ubiquitin ligase by helping the degradation of the cytoplasmic misfolded proteins. Finally, UBE3A also promotes its own degradation in vivo. Plays an important role in the regulation of the circadian clock: involved in the ubiquitination of the core clock component BMAL1, leading to its proteasomal degradation. Acts as a regulator of synaptic development by mediating ubiquitination and degradation of ARC. Required for synaptic remodeling in neurons by mediating ubiquitination and degradation of LAMTOR1, thereby limiting mTORC1 signaling and activity-dependent synaptic remodeling. Synergizes with WBP2 in enhancing PGR activity. The sequence is that of Ubiquitin-protein ligase E3A from Mus musculus (Mouse).